An 85-amino-acid polypeptide reads, in one-letter code: Sec-independent protein translocase protein TatA (85 aa).

Residues 7-27 (VFGSLGWTEILLILFIALLLF) form a helical membrane-spanning segment. The disordered stretch occupies residues 50–85 (LTGESDDSSQQISQEQERSVPKEETKTSKSKKSKSA). Residues 64–76 (EQERSVPKEETKT) show a composition bias toward basic and acidic residues.

Belongs to the TatA/E family. In terms of assembly, forms a complex with TatC.

The protein localises to the cell inner membrane. Its function is as follows. Part of the twin-arginine translocation (Tat) system that transports large folded proteins containing a characteristic twin-arginine motif in their signal peptide across membranes. TatA could form the protein-conducting channel of the Tat system. This Leptospira interrogans serogroup Icterohaemorrhagiae serovar Lai (strain 56601) protein is Sec-independent protein translocase protein TatA.